Reading from the N-terminus, the 801-residue chain is MGWLCTKFLSSVSCLILLWVTGSGGIKVLGDPTCFSDYIRTSTCEWQLDSTVDCSSQLLLDYRLLFEFSENLTCTPKNSADTVCVCQMAIEEPIQADTYWLELWSERGQLWQGSFKPSDNVKPPAPDNLTLHTNVSNALLLMWSNPYPSNNFLHKGLICMVNISREDNPAEFKVYNVTYTEPKLSFPVNTLTSGVRYRARVRVLSQSFPGIWSEWSPSITWYNHFQLPLLQRLPLGVSISCICILLFCLTCYFSIIKIKKIWWDQIPTPARSPLAAIIIQDTKVSLWEKQTRSQESTKSRHWKTCLTKLLPCLLEHRVKKERESPKAAKTKPLQSPEKAGWYPAEVSRTVLWPENVHVSVVRCMELFEAPVQNVEEEEDEMVKGDLSMSPENSGGGFQESQADIMARLTENLFSDLLGAENGGVGQSSMAESSSLLPSESGQASTSWACFPTGPSETTCQVTGQQPPHPDPERATGTACTQVPLVISDNPAYRSFSDFSSPAPNPGELASEQKQAGHLEEGDLLSPVDPHSSGPPMQQAESWEQILHMSVLQHGTAGSTPAPTSGYQEFVQAVKQGASQDAGVPGVGPSGDTGYKAFSSLLSSSGVCTDTAAAGTDSGCGGYKPFQNPVPNQSPNSMPLFTFGLDMELPPSPLNSAPPNSTPECLGLELGLKGGTWLKAPPPSEQVPKPFGDDLGLGIVYSSLTCHLCGHLKQHHSQEEDGQIHVVASPGCGCCYDEKSPSLGNLSGTLESCPGEMSQEANLTLAPRTPSNLSGVGKGPGHSPVPSQTTEVPVGTLGVTVS.

An N-terminal signal peptide occupies residues M1 to G25. The Extracellular segment spans residues I26–R232. The cysteines at positions 34 and 44 are disulfide-linked. N71 is a glycosylation site (N-linked (GlcNAc...) asparagine). The cysteines at positions 74 and 86 are disulfide-linked. One can recognise a Fibronectin type-III domain in the interval A125–N223. N-linked (GlcNAc...) asparagine glycans are attached at residues N128, N134, and N162. A Phosphoserine modification is found at S164. A glycan (N-linked (GlcNAc...) asparagine) is linked at N176. A WSXWS motif motif is present at residues W212–S216. The helical transmembrane segment at L233–I256 threads the bilayer. Topologically, residues K257–S801 are cytoplasmic. A Box 1 motif motif is present at residues W262–A270. The interval V424–G476 is disordered. The segment covering Q426 to S444 has biased composition (low complexity). Residues E439–S549 form a required for IRS1 activation and IL4-induced cell growth region. The segment covering P454 to Q465 has biased composition (polar residues). The residue at position 492 (Y492) is a Phosphotyrosine. The interval R493–A515 is disordered. The required for IL4-induced gene expression stretch occupies residues S549 to L644. Phosphotyrosine occurs at positions 566, 594, and 622. The ITIM motif motif lies at I698 to L703. The disordered stretch occupies residues R767–S801.

This sequence belongs to the type I cytokine receptor family. Type 4 subfamily. As to quaternary structure, the functional IL4 receptor is formed by initial binding of IL4 to IL4R. Subsequent recruitment to the complex of the common gamma chain, in immune cells, creates a type I receptor and, in non-immune cells, of IL13RA1 forms a type II receptor. IL4R can also interact with the IL13/IL13RA1 complex to form a similar type II receptor. Interacts with PIK3C3. Interacts with the SH2-containing phosphatases, PTPN6/SHIP1, PTPN11/SHIP2 and INPP5D/SHIP. Interacts with JAK1 through a Box 1-containing region; inhibited by SOCS5. Interacts with SOCS5; inhibits IL4 signaling. Interacts with JAK3. Interacts with CLM1. Interacts with IL13RA2. In terms of processing, on IL4 binding, phosphorylated on C-terminal tyrosine residues. In terms of tissue distribution, isoform 2 is expressed in kidney, spleen, lung and liver.

It localises to the cell membrane. The protein resides in the secreted. In terms of biological role, receptor for both interleukin 4 and interleukin 13. Couples to the JAK1/2/3-STAT6 pathway. The IL4 response is involved in promoting Th2 differentiation. The IL4/IL13 responses are involved in regulating IgE production and, chemokine and mucus production at sites of allergic inflammation. In certain cell types, can signal through activation of insulin receptor substrates, IRS1/IRS2. Its function is as follows. Isoform 2 (soluble form) inhibits IL4-induced spleen cell proliferation. This Rattus norvegicus (Rat) protein is Interleukin-4 receptor subunit alpha (Il4r).